A 246-amino-acid chain; its full sequence is tRNA (guanine-N(1)-)-methyltransferase (246 aa).

Residues Gly-114 and 134–139 contribute to the S-adenosyl-L-methionine site; that span reads IGDYIL.

This sequence belongs to the RNA methyltransferase TrmD family. Homodimer.

The protein localises to the cytoplasm. The catalysed reaction is guanosine(37) in tRNA + S-adenosyl-L-methionine = N(1)-methylguanosine(37) in tRNA + S-adenosyl-L-homocysteine + H(+). In terms of biological role, specifically methylates guanosine-37 in various tRNAs. The polypeptide is tRNA (guanine-N(1)-)-methyltransferase (Coxiella burnetii (strain CbuK_Q154) (Coxiella burnetii (strain Q154))).